A 423-amino-acid chain; its full sequence is tRNA(Ile)-lysidine synthase (423 aa).

Residue 18-23 participates in ATP binding; sequence SGGADS.

Belongs to the tRNA(Ile)-lysidine synthase family.

The protein resides in the cytoplasm. The catalysed reaction is cytidine(34) in tRNA(Ile2) + L-lysine + ATP = lysidine(34) in tRNA(Ile2) + AMP + diphosphate + H(+). Its function is as follows. Ligates lysine onto the cytidine present at position 34 of the AUA codon-specific tRNA(Ile) that contains the anticodon CAU, in an ATP-dependent manner. Cytidine is converted to lysidine, thus changing the amino acid specificity of the tRNA from methionine to isoleucine. The sequence is that of tRNA(Ile)-lysidine synthase from Aromatoleum aromaticum (strain DSM 19018 / LMG 30748 / EbN1) (Azoarcus sp. (strain EbN1)).